The sequence spans 244 residues: Orotidine 5'-phosphate decarboxylase (244 aa).

Residues D20, K42, D70–T79, T125, R186, Q195, G215, and R216 contribute to the substrate site. The active-site Proton donor is K72.

This sequence belongs to the OMP decarboxylase family. Type 1 subfamily. Homodimer.

The catalysed reaction is orotidine 5'-phosphate + H(+) = UMP + CO2. It participates in pyrimidine metabolism; UMP biosynthesis via de novo pathway; UMP from orotate: step 2/2. Catalyzes the decarboxylation of orotidine 5'-monophosphate (OMP) to uridine 5'-monophosphate (UMP). The polypeptide is Orotidine 5'-phosphate decarboxylase (Xylella fastidiosa (strain M23)).